Reading from the N-terminus, the 591-residue chain is MAFTFPPSYRTLVGLYYIFTLMHTAVSTPPDDPVKCVSGNTNCTVTNSYGAFPDRSTCRAANVAYPKTEAELVSVVAAATQAGRKMRVTTRYSHSITKLVCTDGTEGLFISTKFLNHTVQADATAMTMTVESGMTLRQLIVEAAKVGLALPYAPYWWGLTVGGMMGTGAHGSSLWGKGSAVHDYVTEIRMVSPGSVNEGFAKIRILSETTTPNEFNAAKVSLGVLGVISQVTFELQPMFKRSLTYTMRNDSDFEDQAVTFGKKHEFADFIWLPSQGKVVYRRDDRVAVNTSGNGLFDFLPFRSQLSAAIAIIRTSEETQERFRDANGKCVGATIISSTLFAPSYGLTNNGIIFTGYPVVGSQNRMMSSGSCLDSLQDGLITACAWDSRIKGEFFHQTTLSVPLTQVKSFISDIKSLVKIEQKSLCGLELHYGILMRYVTSSPAYLGKETEALDFDITYYRAKDPLTPRLYEDFIEEIEQIALFKYNALPHWGKNRNLAFDGVIRKYNNAPAFLKVKDSYDPKGLFSSEWTDQILGIKGNASIVKDGCALEGLCICSKDAHCAPAKGYLCRPGKVYKEARVCTRVDGIISVI.

An N-terminal signal peptide occupies residues 1-27 (MAFTFPPSYRTLVGLYYIFTLMHTAVS). One can recognise an FAD-binding PCMH-type domain in the interval 56-238 (STCRAANVAY…SQVTFELQPM (183 aa)).

It belongs to the oxygen-dependent FAD-linked oxidoreductase family. FAD is required as a cofactor.

It carries out the reaction L-gulono-1,4-lactone + O2 = L-ascorbate + H2O2 + H(+). Its pathway is cofactor biosynthesis; L-ascorbate biosynthesis. In terms of biological role, catalyzes the oxidation of L-gulono-1,4-lactone to ascorbic acid. L-gulono-1,4-lactone is oxidized to hydrogen peroxide and L-xylo-hexulonolactone which spontaneously isomerizes to L-ascorbate. This chain is L-gulonolactone oxidase 2, found in Arabidopsis thaliana (Mouse-ear cress).